Consider the following 286-residue polypeptide: Bifunctional protein FolD (286 aa).

Residues 165 to 167 and S190 each bind NADP(+); that span reads GRS.

It belongs to the tetrahydrofolate dehydrogenase/cyclohydrolase family. Homodimer.

The catalysed reaction is (6R)-5,10-methylene-5,6,7,8-tetrahydrofolate + NADP(+) = (6R)-5,10-methenyltetrahydrofolate + NADPH. The enzyme catalyses (6R)-5,10-methenyltetrahydrofolate + H2O = (6R)-10-formyltetrahydrofolate + H(+). The protein operates within one-carbon metabolism; tetrahydrofolate interconversion. Its function is as follows. Catalyzes the oxidation of 5,10-methylenetetrahydrofolate to 5,10-methenyltetrahydrofolate and then the hydrolysis of 5,10-methenyltetrahydrofolate to 10-formyltetrahydrofolate. This is Bifunctional protein FolD from Staphylococcus epidermidis (strain ATCC 12228 / FDA PCI 1200).